A 204-amino-acid polypeptide reads, in one-letter code: Recombination protein RecR (204 aa).

The segment at Cys61–Cys76 adopts a C4-type zinc-finger fold. Residues Ser84–Pro183 enclose the Toprim domain.

This sequence belongs to the RecR family.

May play a role in DNA repair. It seems to be involved in an RecBC-independent recombinational process of DNA repair. It may act with RecF and RecO. This Polynucleobacter asymbioticus (strain DSM 18221 / CIP 109841 / QLW-P1DMWA-1) (Polynucleobacter necessarius subsp. asymbioticus) protein is Recombination protein RecR.